A 313-amino-acid polypeptide reads, in one-letter code: Ethylene-responsive transcription factor ERN2 (313 aa).

A compositionally biased stretch (basic and acidic residues) spans 1-10; the sequence is MEIQFDEPKK. The segment at 1 to 29 is disordered; it reads MEIQFDEPKKSLRPKKVNKFKGRNKKSET. Basic residues predominate over residues 11 to 24; that stretch reads SLRPKKVNKFKGRN. A DNA-binding region (AP2/ERF) is located at residues 32 to 89; it reads KFVGVRQRPSGRYVAEIKDTTQNIRMWLGTFETAEEAARAYDEAATLLRGSKTRTNFV. Disordered regions lie at residues 108 to 143 and 157 to 204; these read NRKK…TSST and TSAS…SSST. Composition is skewed to low complexity over residues 122-143 and 157-193; these read SSTT…TSST and TSAS…TNVN.

It belongs to the AP2/ERF transcription factor family. ERF subfamily. In terms of tissue distribution, expressed in roots, root hairs and leaves. Expressed in root epidermis and root hairs.

It is found in the nucleus. Functionally, transcription factor involved in symbiotic nodule signaling in response to rhizobial Nod factors (NFs). Binds to the GCC box (NF-responsive box) of ENOD11 promoter. Acts as a transcriptional activator of NF-responsive box-containing target gene promoters in root hairs. Involved in early stages of root nodule development. Functions redundantly with ERN1. Is essential with ERN1 for the initiation of root hair infection, and nodule organogenesis and development. Required for accurate expression of the NF signaling genes ENOD11 and ENOD12. In Medicago truncatula (Barrel medic), this protein is Ethylene-responsive transcription factor ERN2.